Consider the following 61-residue polypeptide: Small ribosomal subunit protein uS14 (61 aa).

Zn(2+) contacts are provided by Cys-24, Cys-27, Cys-40, and Cys-43.

Belongs to the universal ribosomal protein uS14 family. Zinc-binding uS14 subfamily. In terms of assembly, part of the 30S ribosomal subunit. Contacts proteins S3 and S10. Requires Zn(2+) as cofactor.

In terms of biological role, binds 16S rRNA, required for the assembly of 30S particles and may also be responsible for determining the conformation of the 16S rRNA at the A site. This Limosilactobacillus fermentum (strain NBRC 3956 / LMG 18251) (Lactobacillus fermentum) protein is Small ribosomal subunit protein uS14.